The following is a 554-amino-acid chain: Solute carrier family 22 member 1 (554 aa).

Topologically, residues 1–21 (MPTVDDVLEQVGEFGWFQKRT) are cytoplasmic. Residues 22 to 42 (FLFLCLISAILAPIYLGIVFL) form a helical membrane-spanning segment. At 43-149 (GFTPDHRCRS…LVCADAWKVD (107 aa)) the chain is on the extracellular side. Residue Asn71 is glycosylated (N-linked (GlcNAc...) asparagine). The helical transmembrane segment at 150–170 (LFQSCVNLGFFLGSLGVGYIA) threads the bilayer. The Cytoplasmic portion of the chain corresponds to 171 to 176 (DRFGRK). The chain crosses the membrane as a helical span at residues 177–197 (LCLLLTTLINAVSGVLTAVAP). Residues 198-206 (DYTSMLLFR) are Extracellular-facing. The helical transmembrane segment at 207–229 (LLQGLVSKGSWMSGYTLITEFVG) threads the bilayer. The Cytoplasmic segment spans residues 230 to 237 (SGYRRTVA). The chain crosses the membrane as a helical span at residues 238-258 (ILYQVAFSVGLVALSGVAYAI). Residues 259–262 (PNWR) lie on the Extracellular side of the membrane. The chain crosses the membrane as a helical span at residues 263 to 283 (WLQLTVSLPTFLCLFYYWCVP). Residues 283–287 (PESPR) carry the Proline-rich sequence motif. Over 284–347 (ESPRWLLSQK…FRTPNLRKHT (64 aa)) the chain is Cytoplasmic. At Ser333 the chain carries Phosphoserine. Residues 348–368 (FILMFLWFTCSVLYQGLILHM) traverse the membrane as a helical segment. Over 369–374 (GATGGN) the chain is Extracellular. The chain crosses the membrane as a helical span at residues 375–395 (VYLDFFYSSLVEFPAAFVILV). Residues 396–402 (TIDRVGR) are Cytoplasmic-facing. A helical membrane pass occupies residues 403–423 (IYPMAASNLAAGVASVILIFV). The Extracellular segment spans residues 424-431 (PQDLHWLT). A helical transmembrane segment spans residues 432–452 (IVLSCVGRMGATIVLQMICLV). Over 453–464 (NAELYPTFVRNL) the chain is Cytoplasmic. A helical transmembrane segment spans residues 465-485 (GVMVCSALCDVGGIITPFMVF). Over 486–492 (RLMEVWQ) the chain is Extracellular. A helical transmembrane segment spans residues 493–513 (PLPLIVFGVLGLLAGGMTLLL). Residues 514–554 (PETKGVALPETIEDAENLRRKAKPKESKIYLQVQTSELKGP) are Cytoplasmic-facing.

It belongs to the major facilitator (TC 2.A.1) superfamily. Organic cation transporter (TC 2.A.1.19) family. Phosphorylated. In terms of tissue distribution, expressed in kidney, liver and intestine.

Its subcellular location is the basolateral cell membrane. The protein resides in the apical cell membrane. The protein localises to the lateral cell membrane. It localises to the basal cell membrane. The enzyme catalyses 1-methylnicotinamide(out) = 1-methylnicotinamide(in). It catalyses the reaction dopamine(out) = dopamine(in). It carries out the reaction serotonin(out) = serotonin(in). The catalysed reaction is (R)-adrenaline(out) = (R)-adrenaline(in). The enzyme catalyses (R)-noradrenaline(out) = (R)-noradrenaline(in). It catalyses the reaction histamine(out) = histamine(in). It carries out the reaction guanidine(out) = guanidine(in). The catalysed reaction is choline(out) = choline(in). The enzyme catalyses acetylcholine(in) = acetylcholine(out). It catalyses the reaction thiamine(in) = thiamine(out). It carries out the reaction spermidine(in) = spermidine(out). The catalysed reaction is agmatine(out) = agmatine(in). The enzyme catalyses putrescine(out) = putrescine(in). It catalyses the reaction (R)-carnitine(in) = (R)-carnitine(out). It carries out the reaction O-isobutanoyl-(R)-carnitine(in) = O-isobutanoyl-(R)-carnitine(out). The catalysed reaction is O-acetyl-(R)-carnitine(in) = O-acetyl-(R)-carnitine(out). The enzyme catalyses O-3-hydroxybutanoyl-(R)-carnitine(in) = O-3-hydroxybutanoyl-(R)-carnitine(out). It catalyses the reaction O-propanoyl-(R)-carnitine(in) = O-propanoyl-(R)-carnitine(out). It carries out the reaction O-butanoyl-(R)-carnitine(in) = O-butanoyl-(R)-carnitine(out). The catalysed reaction is O-2-methylbutanoyl-(R)-carnitine(in) = O-2-methylbutanoyl-(R)-carnitine(out). The enzyme catalyses O-3-methylbutanoyl-(R)-carnitine(in) = O-3-methylbutanoyl-(R)-carnitine(out). It catalyses the reaction O-hexanoyl-(R)-carnitine(in) = O-hexanoyl-(R)-carnitine(out). It carries out the reaction L-histidyl-L-proline diketopiperazine(in) = L-histidyl-L-proline diketopiperazine(out). The catalysed reaction is (R)-salsolinol(in) = (R)-salsolinol(out). The enzyme catalyses prostaglandin F2alpha(out) = prostaglandin F2alpha(in). It catalyses the reaction prostaglandin E2(out) = prostaglandin E2(in). Phosphorylation of the transporter leads to changes in its substrate affinity, resulting in a regulation of the transport activity. In contrast with rat ortholog, ASP uptake is inhibited by protein kinase A (PKA) and C (PKC) activation. ASP uptake is also endogenously activated by calmodulin, the calmodulin-dependent kinase II and LCK tyrosine kinase. Inhibited by cGMP, most likely through a cGMP-binding protein that interacts with OCT1. Functionally, electrogenic voltage-dependent transporter that mediates the transport of a variety of organic cations such as endogenous bioactive amines, cationic drugs and xenobiotics. Functions as a pH- and Na(+)-independent, bidirectional transporter. Cation cellular uptake or release is driven by the electrochemical potential (i.e. membrane potential and concentration gradient) and substrate selectivity. Hydrophobicity is a major requirement for recognition in polyvalent substrates and inhibitors. Primarily expressed in the basolateral membrane of hepatocytes and proximal tubules and involved in the uptake and disposition of cationic compounds from the blood by hepatic and renal clearance. Most likely functions as an uptake carrier in enterocytes contributing to the intestinal elimination of organic cations from the systemic circulation. Transports endogenous monoamines such as N-1-methylnicotinamide (NMN), guanidine, neurotransmitters dopamine, serotonin, noradrenaline, adrenaline and histamine, and quaternary ammonium compound such as choline. Also transports natural polyamines such as spermidine, agmatine and putrescine at low affinity, but relatively high turnover. Involved in the hepatic and intestinal uptake of the vitamin B1/thiamine, hence regulating hepatic lipid and energy metabolism. Contributes to the influx and efflux of fatty acid carriers carnitines and acylcarnitines across the basolateral membrane of hepatocytes, from the liver to the systemic circulation and inversely and may be involved in regulating the systemic availability of hepatic acylcarnitines. Also capable of transporting non-amine endogenous compounds such as prostaglandin E2 (PGE2) and prostaglandin F2-alpha (PGF2-alpha). May contribute to the transport of cationic compounds in testes across the blood-testis-barrier. Also mediates the uptake of xenobiotics tributylmethylammonium (TBuMA), quinidine, N-methyl-quinine (NMQ), N-methyl-quinidine (NMQD) N-(4,4-azo-n-pentyl)-quinuclidine (APQ), azidoprocainamide methoiodide (AMP), N-(4,4-azo-n-pentyl)-21-deoxyajmalinium (APDA) and 4-(4-(dimethylamino)styryl)-N-methylpyridinium (ASP). In Oryctolagus cuniculus (Rabbit), this protein is Solute carrier family 22 member 1 (SLC22A1).